The chain runs to 124 residues: Aspartate 1-decarboxylase (124 aa).

Ser-25 acts as the Schiff-base intermediate with substrate; via pyruvic acid in catalysis. Position 25 is a pyruvic acid (Ser) (Ser-25). Thr-57 lines the substrate pocket. Residue Tyr-58 is the Proton donor of the active site. Residue 73-75 (GAA) coordinates substrate.

The protein belongs to the PanD family. In terms of assembly, heterooctamer of four alpha and four beta subunits. Pyruvate serves as cofactor. Post-translationally, is synthesized initially as an inactive proenzyme, which is activated by self-cleavage at a specific serine bond to produce a beta-subunit with a hydroxyl group at its C-terminus and an alpha-subunit with a pyruvoyl group at its N-terminus.

The protein resides in the cytoplasm. It carries out the reaction L-aspartate + H(+) = beta-alanine + CO2. The protein operates within cofactor biosynthesis; (R)-pantothenate biosynthesis; beta-alanine from L-aspartate: step 1/1. Catalyzes the pyruvoyl-dependent decarboxylation of aspartate to produce beta-alanine. The polypeptide is Aspartate 1-decarboxylase (Syntrophobacter fumaroxidans (strain DSM 10017 / MPOB)).